The primary structure comprises 429 residues: Phosphoribosylamine--glycine ligase (429 aa).

The region spanning 109-316 (KDFLARHNIP…LVELCLAACE (208 aa)) is the ATP-grasp domain. An ATP-binding site is contributed by 135-196 (LREKGAPIVI…EEFLDGEEAS (62 aa)). The segment at 212–237 (SQDHKRVGDKDTGPNTGGMGAYSPAP) is disordered. Positions 213 to 223 (QDHKRVGDKDT) are enriched in basic and acidic residues. Residues E286 and N288 each coordinate Mg(2+).

Belongs to the GARS family. As to quaternary structure, monomer. It depends on Mg(2+) as a cofactor. Mn(2+) is required as a cofactor.

The enzyme catalyses 5-phospho-beta-D-ribosylamine + glycine + ATP = N(1)-(5-phospho-beta-D-ribosyl)glycinamide + ADP + phosphate + H(+). The protein operates within purine metabolism; IMP biosynthesis via de novo pathway; N(1)-(5-phospho-D-ribosyl)glycinamide from 5-phospho-alpha-D-ribose 1-diphosphate: step 2/2. The sequence is that of Phosphoribosylamine--glycine ligase from Escherichia coli O157:H7.